A 69-amino-acid polypeptide reads, in one-letter code: KKDDYPVDTAERNCKFECNIVDDKGYCDNLCKGRKAEKGYCYSLKASCYCYGLPDDSPTKTSKRCNPNV.

An LCN-type CS-alpha/beta domain is found at 2–66 (KDDYPVDTAE…SPTKTSKRCN (65 aa)). Disulfide bonds link C14–C65, C18–C41, C27–C48, and C31–C50.

Belongs to the long (4 C-C) scorpion toxin superfamily. Sodium channel inhibitor family. As to expression, expressed by the venom gland.

The protein localises to the secreted. In terms of biological role, inhibits voltage-gated sodium channels (Nav). This toxin shows insect lethality against crickets. The polypeptide is Toxin Tma2 (Tityus macrochirus (Scorpion)).